The chain runs to 185 residues: MQQGKDSEQIAQRYAEALKELALSETGLLEQFGNDTDGMLQVMEESPDFERFLVVPIIAMADKKRLLVEAFGGKVHPYMLNFLQLMVDRRRIALLRPVCTSYQRILRELQQTTLAEVISAVPLSEEQASALIERIRRRTAAVRVELRRRVDPELLGGMIIKIGDEVIDASLRGQLRKLTLQLTLS.

It belongs to the ATPase delta chain family. F-type ATPases have 2 components, F(1) - the catalytic core - and F(0) - the membrane proton channel. F(1) has five subunits: alpha(3), beta(3), gamma(1), delta(1), epsilon(1). CF(0) has four main subunits: a(1), b(1), b'(1) and c(10-14). The alpha and beta chains form an alternating ring which encloses part of the gamma chain. F(1) is attached to F(0) by a central stalk formed by the gamma and epsilon chains, while a peripheral stalk is formed by the delta, b and b' chains.

It localises to the cell inner membrane. Its function is as follows. F(1)F(0) ATP synthase produces ATP from ADP in the presence of a proton or sodium gradient. F-type ATPases consist of two structural domains, F(1) containing the extramembraneous catalytic core and F(0) containing the membrane proton channel, linked together by a central stalk and a peripheral stalk. During catalysis, ATP synthesis in the catalytic domain of F(1) is coupled via a rotary mechanism of the central stalk subunits to proton translocation. In terms of biological role, this protein is part of the stalk that links CF(0) to CF(1). It either transmits conformational changes from CF(0) to CF(1) or is implicated in proton conduction. This is ATP synthase subunit delta from Gloeobacter violaceus (strain ATCC 29082 / PCC 7421).